Consider the following 564-residue polypeptide: M protein, serotype 12 (564 aa).

The first 41 residues, 1–41 (MAKNTTNRHYSLRKLKTGTASVAVALTVVGAGLVAGQTVRA), serve as a signal peptide directing secretion. Residues 44 to 505 (SDLVAEKQRL…RAGKASDSQT (462 aa)) are a coiled coil. 4 C repeats span residues 285–319 (KQLE…EAEL), 327–361 (AKVT…VEAA), 363–397 (KQLE…EKDL), and 405–439 (DKVK…EKAL). 2 disordered regions span residues 372–391 (SEAS…EAKK) and 404–438 (LDKV…VEKA). Composition is skewed to basic and acidic residues over residues 404 to 413 (LDKVKEEKQI) and 421 to 438 (LRRD…VEKA). D repeat units lie at residues 472–477 (AKLEAE), 478–483 (AKALKE), 486–491 (AKQAEE), and 493–498 (AKLRAG). The interval 493–550 (AKLRAGKASDSQTPDAKPGNKAVPGKGQAPQAGTKPNQNKAPMKETKRQLPSTGETAN) is disordered. Positions 542–546 (LPSTG) match the LPXTG sorting signal motif. Thr545 is subject to Pentaglycyl murein peptidoglycan amidated threonine. A propeptide spans 546 to 564 (GETANPFFTAAALTVMAAA) (removed by sortase).

It belongs to the M protein family.

It localises to the secreted. The protein localises to the cell wall. In terms of biological role, this protein is one of the different antigenic serotypes of protein M. Protein M is closely associated with virulence of the bacterium and can render the organism resistant to phagocytosis. The chain is M protein, serotype 12 (emm12) from Streptococcus pyogenes.